Reading from the N-terminus, the 357-residue chain is MEENKQRVKSMINILQLVAPGTPLREGIDNVLRAQTGGLIVLGYNEQIKSIVDGGFHINCAFSPASLYELAKMDGALILNETGSKILIANAQLVPESSIDSIETGMRHRTAERVAKQTGSLVVAISQRRNVITLYQGNLRYTLKDIGVILTKANQAIQTLEKYKAVWNDGITNLGILEFEEVVTMSEVVHVLHSVEMVLRIKNEILSYIHELGTEGRLIRLQLTELLADLEAEAALLIKDYYQEKTQDHHQILKKLQELANTQLLEDSDLVKLLGYPGQTSLEESVTPRGYRITSKISRVPPLIIENLINRFKTLQGVCRATINELDDVEGIGEVRAKKIREGLKRIQEHLYMSRHN.

A DAC domain is found at 8–146 (VKSMINILQL…GNLRYTLKDI (139 aa)). ATP contacts are provided by residues G75, L93, and 106–110 (MRHRT).

Belongs to the DisA family. As to quaternary structure, homooctamer. Mg(2+) is required as a cofactor.

The enzyme catalyses 2 ATP = 3',3'-c-di-AMP + 2 diphosphate. Its function is as follows. Participates in a DNA-damage check-point that is active prior to asymmetric division when DNA is damaged. DisA forms globular foci that rapidly scan along the chromosomes during sporulation, searching for lesions. When a lesion is present, DisA pauses at the lesion site. This triggers a cellular response that culminates in a temporary block in sporulation initiation. In terms of biological role, also has diadenylate cyclase activity, catalyzing the condensation of 2 ATP molecules into cyclic di-AMP (c-di-AMP). c-di-AMP acts as a signaling molecule that couples DNA integrity with progression of sporulation. The rise in c-di-AMP level generated by DisA while scanning the chromosome, operates as a positive signal that advances sporulation; upon encountering a lesion, the DisA focus arrests at the damaged site and halts c-di-AMP synthesis. In Bacillus anthracis (strain CDC 684 / NRRL 3495), this protein is DNA integrity scanning protein DisA.